Consider the following 81-residue polypeptide: Keratin-associated protein 19-3 (81 aa).

This sequence belongs to the KRTAP type 19 family. As to quaternary structure, interacts with hair keratins.

In terms of biological role, in the hair cortex, hair keratin intermediate filaments are embedded in an interfilamentous matrix, consisting of hair keratin-associated proteins (KRTAP), which are essential for the formation of a rigid and resistant hair shaft through their extensive disulfide bond cross-linking with abundant cysteine residues of hair keratins. The matrix proteins include the high-sulfur and high-glycine-tyrosine keratins. The chain is Keratin-associated protein 19-3 (KRTAP19-3) from Homo sapiens (Human).